An 844-amino-acid polypeptide reads, in one-letter code: MVNFTVDEIRGLMDKKRNIRNMSVIAHVDHGKSTLTDSLVSKAGIIAGAKAGETRFTDTRKDEQERCITIKSTAISMYFEVEEKDLVFITHPDQREKECKGFLINLIDSPGHVDFSSEVTAALRVTDGALVVVDCVSGVCVQTETVLRQAIAERIKPILFMNKMDRALLELQLDAEELYQTFQRIVENVNVIIATYNDDGGPMGEVRVDPSKGSVGFGSGLHGWAFTLKQFSEMYSEKFKIDVVKLMNRLWGENFFNAKTKKWQKQKEADNKRSFCMYILDPIYKVFDAIMNYKKEEIGTLLEKIGVTLKHEDKDKDGKALLKTVMRTWLPAGEALLQMIAIHLPSPVVAQKYRMEMLYEGPHDDEAAIAVKSCDPDGPLMMYISKMVPTSDKGRFYAFGRVFAGKVATGQKCRIMGPNYTPGKKEDLYEKAIQRTILMMGRYVEAIEDVPSGNICGLVGVDQFLVKTGTITTFKDAHNMKVMKFSVSPVVRVAVEPKNPADLPKLVEGLKRLAKSDPMVQCIIEESGEHIIAGAGELHLEICLKDLEEDHACIPLKKSDPVVSYRETVSEESDQMCLSKSPNKHNRLLMKALPMPDGLPEDIDNGDVSAKDEFKARARYLSEKYDYDVTEARKIWCFGPDGTGPNFILDCTKSVQYLNEIKDSVVAGFQWASKEGILADENLRGVRFNIYDVTLHADAIHRGGGQIIPTTRRCLYAAAITAKPRLMEPVYLCEIQCPEVAVGGIYGVLNRRRGHVFEENQVVGTPMFVVKAYLPVNESFGFTADLRSNTGGQAFPQCVFDHWQVLPGDPSEPSSKPYAIVQDTRKRKGLKEGLPDLSQYLDKL.

A tr-type G domain is found at 17–348; sequence RNIRNMSVIA…MIAIHLPSPV (332 aa). 26–33 provides a ligand contact to GTP; the sequence is AHVDHGKS. A phosphothreonine mark is found at threonine 57 and threonine 59. Residues 162 to 165 and 219 to 221 each bind GTP; these read NKMD and SGL. Histidine 701 carries the diphthamide modification.

This sequence belongs to the TRAFAC class translation factor GTPase superfamily. Classic translation factor GTPase family. EF-G/EF-2 subfamily. Post-translationally, phosphorylation by EF-2 kinase completely inactivates eEF2.

It localises to the cytoplasm. The enzyme catalyses GTP + H2O = GDP + phosphate + H(+). Functionally, catalyzes the GTP-dependent ribosomal translocation step during translation elongation. During this step, the ribosome changes from the pre-translocational (PRE) to the post-translocational (POST) state as the newly formed A-site-bound peptidyl-tRNA and P-site-bound deacylated tRNA move to the P and E sites, respectively. Catalyzes the coordinated movement of the two tRNA molecules, the mRNA and conformational changes in the ribosome. The chain is Eukaryotic translation elongation factor 2 from Drosophila melanogaster (Fruit fly).